A 223-amino-acid polypeptide reads, in one-letter code: Carnitine transport permease protein OpuCD (223 aa).

In terms of domain architecture, ABC transmembrane type-1 spans 22–202 (FWRHFLMSAY…VMAILADVLL (181 aa)). A run of 5 helical transmembrane segments spans residues 27–47 (LMSA…GVYI), 63–83 (IIQT…MGLG), 87–107 (VVLS…YTGI), 148–168 (ALVI…GGLG), and 182–202 (AIIL…DVLL).

It belongs to the binding-protein-dependent transport system permease family. In terms of assembly, the complex is composed of two ATP-binding proteins (OpuCA), two transmembrane proteins (OpuCB and OpuCD) and a solute-binding protein (OpuCC).

Its subcellular location is the cell membrane. Its function is as follows. Part of the ABC transporter complex OpuCABCD involved in carnitine uptake. Probably responsible for the translocation of the substrate across the membrane. Involved, with BetL and GbuABC, in osmoprotection and cryoprotection of Listeria. Can also mediate weak glycine betaine transport. In Listeria monocytogenes serotype 1/2a (strain 10403S), this protein is Carnitine transport permease protein OpuCD (opuCD).